Here is a 258-residue protein sequence, read N- to C-terminus: Isoprenyl transferase (258 aa).

D38 is a catalytic residue. Mg(2+) is bound at residue D38. Residues 39 to 42 (GNGR), W43, R51, H55, and 83 to 85 (STE) each bind substrate. N86 acts as the Proton acceptor in catalysis. Residues W87, R89, R206, and 212–214 (RIS) each bind substrate. E225 provides a ligand contact to Mg(2+).

It belongs to the UPP synthase family. Homodimer. Requires Mg(2+) as cofactor.

Catalyzes the condensation of isopentenyl diphosphate (IPP) with allylic pyrophosphates generating different type of terpenoids. This Bacillus thuringiensis subsp. konkukian (strain 97-27) protein is Isoprenyl transferase.